A 601-amino-acid polypeptide reads, in one-letter code: Membrane protein insertase YidC (601 aa).

Residues 10–30 (ISISLVILVLFQVIASYVLPP) traverse the membrane as a helical segment. Residues 34 to 63 (APPHPATQTAQTQPVSGQPAPGVPAPSAVP) are disordered. Residues 39-53 (ATQTAQTQPVSGQPA) are compositionally biased toward low complexity. Over residues 54-63 (PGVPAPSAVP) the composition is skewed to pro residues. 4 consecutive transmembrane segments (helical) span residues 382–404 (FGNMGVAIIVFTIGLKLVLFPLV), 455–475 (LPMLPQIPIFFSLYKVIFISI), 510–530 (ALSPFLHLGILPIIMGITMWG), and 549–569 (FMPVIFTFMLGRFAAGLVLYY).

The protein belongs to the OXA1/ALB3/YidC family. Type 1 subfamily. In terms of assembly, interacts with the Sec translocase complex via SecD. Specifically interacts with transmembrane segments of nascent integral membrane proteins during membrane integration.

Its subcellular location is the cell inner membrane. Its function is as follows. Required for the insertion and/or proper folding and/or complex formation of integral membrane proteins into the membrane. Involved in integration of membrane proteins that insert both dependently and independently of the Sec translocase complex, as well as at least some lipoproteins. Aids folding of multispanning membrane proteins. This is Membrane protein insertase YidC from Acidiphilium cryptum (strain JF-5).